We begin with the raw amino-acid sequence, 453 residues long: Kynureninase (453 aa).

Pyridoxal 5'-phosphate-binding positions include Leu-111, Thr-112, 139–142, Ser-196, Asp-226, His-229, and Tyr-251; that span reads FPSD. Position 252 is an N6-(pyridoxal phosphate)lysine (Lys-252). Pyridoxal 5'-phosphate is bound by residues Trp-286 and Asn-314.

The protein belongs to the kynureninase family. Homodimer. The cofactor is pyridoxal 5'-phosphate.

Its subcellular location is the cytoplasm. The protein resides in the nucleus. The enzyme catalyses L-kynurenine + H2O = anthranilate + L-alanine + H(+). It carries out the reaction 3-hydroxy-L-kynurenine + H2O = 3-hydroxyanthranilate + L-alanine + H(+). Its pathway is amino-acid degradation; L-kynurenine degradation; L-alanine and anthranilate from L-kynurenine: step 1/1. It functions in the pathway cofactor biosynthesis; NAD(+) biosynthesis; quinolinate from L-kynurenine: step 2/3. In terms of biological role, catalyzes the cleavage of L-kynurenine (L-Kyn) and L-3-hydroxykynurenine (L-3OHKyn) into anthranilic acid (AA) and 3-hydroxyanthranilic acid (3-OHAA), respectively. This chain is Kynureninase, found in Saccharomyces cerevisiae (strain ATCC 204508 / S288c) (Baker's yeast).